The sequence spans 1301 residues: Dentin sialophosphoprotein (1301 aa).

A signal peptide spans methionine 1–alanine 15. Residues asparagine 41 and asparagine 49 are each glycosylated (N-linked (GlcNAc...) asparagine). The tract at residues lysine 55–glycine 89 is disordered. Residues histidine 62–glutamate 79 are compositionally biased toward basic and acidic residues. N-linked (GlcNAc...) asparagine glycans are attached at residues asparagine 81, asparagine 130, asparagine 150, asparagine 190, asparagine 191, asparagine 209, and asparagine 222. A compositionally biased stretch (polar residues) spans alanine 146 to glycine 165. Positions alanine 146–glycine 171 are disordered. A disordered region spans residues asparagine 202–aspartate 1301. The span at serine 203–arginine 221 shows a compositional bias: polar residues. The segment covering alanine 251–alanine 267 has biased composition (acidic residues). The residue at position 259 (serine 259) is a Phosphoserine; by CK1. The segment covering lysine 271–glutamine 280 has biased composition (polar residues). Asparagine 275 is a glycosylation site (N-linked (GlcNAc...) asparagine). 2 stretches are compositionally biased toward basic and acidic residues: residues glutamate 281–serine 293 and aspartate 300–glutamate 327. Residue serine 301 is modified to Phosphoserine. An N-linked (GlcNAc...) asparagine glycan is attached at asparagine 336. Residues arginine 340–glutamate 377 are compositionally biased toward basic and acidic residues. N-linked (GlcNAc...) asparagine glycosylation occurs at asparagine 387. Residues isoleucine 388 to glutamine 404 show a composition bias toward basic and acidic residues. Composition is skewed to low complexity over residues serine 439–serine 452 and glycine 462–serine 487. The Cell attachment site motif lies at arginine 488–aspartate 490. Residues arginine 488–aspartate 506 show a composition bias toward polar residues. Positions threonine 518–asparagine 534 are enriched in low complexity. Positions aspartate 536 to serine 549 are enriched in basic and acidic residues. The segment covering serine 555 to serine 564 has biased composition (low complexity). Residues aspartate 581–serine 595 are compositionally biased toward acidic residues. The span at serine 596 to serine 619 shows a compositional bias: low complexity. A compositionally biased stretch (basic and acidic residues) spans serine 620–serine 642. Low complexity-rich tracts occupy residues serine 643–serine 705, serine 715–aspartate 1264, glutamine 1272–aspartate 1284, and serine 1292–aspartate 1301.

As to quaternary structure, interacts with FBLN7. In terms of processing, DSP is glycosylated. As to expression, expressed in teeth. DPP is synthesized by odontoblast and transiently expressed by pre-ameloblasts.

Its subcellular location is the secreted. The protein localises to the extracellular space. It localises to the extracellular matrix. Functionally, DSP may be an important factor in dentinogenesis. DPP may bind high amount of calcium and facilitate initial mineralization of dentin matrix collagen as well as regulate the size and shape of the crystals. In Homo sapiens (Human), this protein is Dentin sialophosphoprotein (DSPP).